The following is a 433-amino-acid chain: MAQFYSAKRRTTTRQIITVSVNDLDSFGQGVARHNGKTLFIPGLLPQENAEVTVTEDKKQYARAKVVRRLSDSPERETPRCPHFGVCGGCQQQHASVDLQQRSKSAALARLMKHEVSEVIADVPWGYRRRARLSLNYLPKTQQLQMGFRKAGSSDIVDVKQCPILVPQLEALLPKVRACLGSLQAMRHLGHVELVQATSGTLMILRHTAPLSSADREKLERFSHSEGLDLYLAPDSEILETVSGEMPWYDSNGLRLTFSPRDFIQVNAGVNQKMVASALEWLDVQPEDRVLDLFCGMGNFTLPLATQAASVVGVEGVPALVEKGQQNARLNGLQNVTFYHENLEEDVTKQPWAKNGFDKVLLDPARAGAAGVMQQIIKLEPIRIVYVSCNPATLARDSEALLKAGYTIARLAMLDMFPHTGHLESMVLFSRVK.

The TRAM domain maps to R10 to R68. [4Fe-4S] cluster-binding residues include C81, C87, C90, and C162. The S-adenosyl-L-methionine site is built by Q265, F294, N299, E315, N342, and D363. The active-site Nucleophile is the C389.

The protein belongs to the class I-like SAM-binding methyltransferase superfamily. RNA M5U methyltransferase family. RlmD subfamily.

It carries out the reaction uridine(1939) in 23S rRNA + S-adenosyl-L-methionine = 5-methyluridine(1939) in 23S rRNA + S-adenosyl-L-homocysteine + H(+). In terms of biological role, catalyzes the formation of 5-methyl-uridine at position 1939 (m5U1939) in 23S rRNA. This is 23S rRNA (uracil(1939)-C(5))-methyltransferase RlmD from Shigella boydii serotype 4 (strain Sb227).